Here is a 245-residue protein sequence, read N- to C-terminus: Lactate utilization protein A (245 aa).

The protein belongs to the LutA/YkgE family.

Its function is as follows. Is involved in L-lactate degradation and allows cells to grow with lactate as the sole carbon source. The chain is Lactate utilization protein A from Exiguobacterium sp. (strain ATCC BAA-1283 / AT1b).